The following is a 208-amino-acid chain: Na(+)-translocating NADH-quinone reductase subunit D (208 aa).

5 helical membrane passes run 42–62 (IVMG…ISLV), 72–92 (IIVQ…LLQA), 103–123 (VFVG…AFAM), 131–151 (LIDG…VATV), and 178–198 (NGLF…IWGL).

Belongs to the NqrDE/RnfAE family. As to quaternary structure, composed of six subunits; NqrA, NqrB, NqrC, NqrD, NqrE and NqrF.

It is found in the cell inner membrane. The catalysed reaction is a ubiquinone + n Na(+)(in) + NADH + H(+) = a ubiquinol + n Na(+)(out) + NAD(+). Its function is as follows. NQR complex catalyzes the reduction of ubiquinone-1 to ubiquinol by two successive reactions, coupled with the transport of Na(+) ions from the cytoplasm to the periplasm. NqrA to NqrE are probably involved in the second step, the conversion of ubisemiquinone to ubiquinol. This is Na(+)-translocating NADH-quinone reductase subunit D from Neisseria gonorrhoeae (strain ATCC 700825 / FA 1090).